We begin with the raw amino-acid sequence, 170 residues long: Cysteine-rich uncharacterized protein 241L (170 aa).

This chain is Cysteine-rich uncharacterized protein 241L, found in Acheta domesticus (House cricket).